The following is a 603-amino-acid chain: Trihelix transcription factor DF1 (603 aa).

Residues 60 to 118 (NRWPRQETLALLKIRSDMGIAFRDASVKGPLWEEVSRKMAEHGYIRNAKKCKEKFENVY) form the Myb-like 1 domain. Disordered regions lie at residues 149 to 201 (QSTT…SSIP), 220 to 249 (LSDN…TRKK), 333 to 408 (KQPN…SSSR), and 532 to 603 (QWPP…TNNL). Composition is skewed to low complexity over residues 168 to 178 (NNNNNNNNNNN), 189 to 198 (TTVMPTLPSS), 221 to 236 (SDNS…TSSD), and 344 to 362 (PQQV…QQPP). Over residues 363-376 (QRSPPPQPPAPLPQ) the composition is skewed to pro residues. Over residues 381–408 (VVSTLDTTKTDNGGDQNMTPAASASSSR) the composition is skewed to polar residues. The region spanning 401–465 (AASASSSRWP…RCKEKWENIN (65 aa)) is the Myb-like 2 domain. Residues 532-555 (QWPPAVTTATTTPAAAQPDQQSQP) are compositionally biased toward low complexity. The span at 559-586 (NFDDEEGTDEEYDDEDEEEENEEEEGGE) shows a compositional bias: acidic residues. Over residues 593–603 (NNNNNKTTNNL) the composition is skewed to low complexity.

It is found in the nucleus. Transcription repressor that negatively regulates root hair growth by directly binding RSL4 promoter and repressing RSL4 expression. Required for the synthesis of seed coat mucilage. This Arabidopsis thaliana (Mouse-ear cress) protein is Trihelix transcription factor DF1.